The sequence spans 275 residues: MQNITDSWFVQGMIKATSDAWLKGWDERNGGNLTLRLDEADIAPFSADFHEKPRYITLSQLMPLLANTPFIVTGSGKFFRNVQLDPAANLGVVKIDSDGAGYHILWGLTHDAVPTSELPAHFLSHCERIKATHGKDRVIMHCHATNLIALTYVLENNTALITRKLWEGSTECLVVFPDGVGILPWMVPGPDEIGQATAQEMQKHSLVLWPFHGVFGSGPTLNETFGLIDTAEKSAEVLVKIYSMGGMKQTITREELVALGKRFGVTPLASAVELY.

Residue Glu117 is part of the active site. Residues His141, His143, and His212 each contribute to the Zn(2+) site.

The protein belongs to the aldolase class II family. RhaD subfamily. As to quaternary structure, homotetramer. The cofactor is Zn(2+).

It localises to the cytoplasm. The catalysed reaction is L-rhamnulose 1-phosphate = (S)-lactaldehyde + dihydroxyacetone phosphate. It participates in carbohydrate degradation; L-rhamnose degradation; glycerone phosphate from L-rhamnose: step 3/3. Catalyzes the reversible cleavage of L-rhamnulose-1-phosphate to dihydroxyacetone phosphate (DHAP) and L-lactaldehyde. The chain is Putative rhamnulose-1-phosphate aldolase from Salmonella typhi.